Reading from the N-terminus, the 414-residue chain is Histidinol dehydrogenase (414 aa).

Residues tyrosine 116, glutamine 177, and asparagine 200 each coordinate NAD(+). Positions 223, 245, and 248 each coordinate substrate. The Zn(2+) site is built by glutamine 245 and histidine 248. Active-site proton acceptor residues include glutamate 313 and histidine 314. 4 residues coordinate substrate: histidine 314, aspartate 347, glutamate 401, and histidine 406. Zn(2+) is bound at residue aspartate 347. Position 406 (histidine 406) interacts with Zn(2+).

The protein belongs to the histidinol dehydrogenase family. Zn(2+) is required as a cofactor.

It carries out the reaction L-histidinol + 2 NAD(+) + H2O = L-histidine + 2 NADH + 3 H(+). Its pathway is amino-acid biosynthesis; L-histidine biosynthesis; L-histidine from 5-phospho-alpha-D-ribose 1-diphosphate: step 9/9. Catalyzes the sequential NAD-dependent oxidations of L-histidinol to L-histidinaldehyde and then to L-histidine. This chain is Histidinol dehydrogenase, found in Staphylococcus epidermidis (strain ATCC 12228 / FDA PCI 1200).